The chain runs to 446 residues: Chromosomal replication initiator protein DnaA (446 aa).

The tract at residues 1–72 (MKNISDLWNQ…ADTIYDLTGE (72 aa)) is domain I, interacts with DnaA modulators. The interval 72-109 (EELSIKFVIPQNQNEEDFMPKSPIKKMSKEEPADFPQN) is domain II. Residues 110-326 (MLNPKYTFDT…GALIRVVAYS (217 aa)) form a domain III, AAA+ region region. The ATP site is built by glycine 154, glycine 156, lysine 157, and threonine 158. The domain IV, binds dsDNA stretch occupies residues 327 to 446 (SLINKDINAD…QIKEIKEQLR (120 aa)).

Belongs to the DnaA family. In terms of assembly, oligomerizes as a right-handed, spiral filament on DNA at oriC.

The protein localises to the cytoplasm. Plays an essential role in the initiation and regulation of chromosomal replication. ATP-DnaA binds to the origin of replication (oriC) to initiate formation of the DNA replication initiation complex once per cell cycle. Binds the DnaA box (a 9 base pair repeat at the origin) and separates the double-stranded (ds)DNA. Forms a right-handed helical filament on oriC DNA; dsDNA binds to the exterior of the filament while single-stranded (ss)DNA is stabiized in the filament's interior. The ATP-DnaA-oriC complex binds and stabilizes one strand of the AT-rich DNA unwinding element (DUE), permitting loading of DNA polymerase. After initiation quickly degrades to an ADP-DnaA complex that is not apt for DNA replication. Binds acidic phospholipids. This is Chromosomal replication initiator protein DnaA from Bacillus licheniformis (strain ATCC 14580 / DSM 13 / JCM 2505 / CCUG 7422 / NBRC 12200 / NCIMB 9375 / NCTC 10341 / NRRL NRS-1264 / Gibson 46).